Consider the following 671-residue polypeptide: DNA polymerase kappa (671 aa).

One can recognise a UmuC domain in the interval 105–285 (WLHVDMDAFY…LPVRKIGGIG (181 aa)). 2 residues coordinate Mg(2+): Asp109 and Asp200. Residue Glu201 is part of the active site. The UBZ3-type zinc-finger motif lies at 576-613 (YWIDGYKCVLCGIELPPSFVEERQEHSDFHLAQRLQNE). Cys583, Cys586, His601, and His605 together coordinate Zn(2+). The segment at 607–671 (AQRLQNEETG…NQNSNETQRK (65 aa)) is disordered. The Nuclear localization signal motif lies at 625-632 (KRRILGKE). Over residues 629–650 (LGKEKVNSKPKKQKPDQKDSSK) the composition is skewed to basic and acidic residues. Over residues 659–671 (TKSNQNSNETQRK) the composition is skewed to polar residues.

The protein belongs to the DNA polymerase type-Y family. The cofactor is Mg(2+). Expressed in roots, leaves, stems, flowers and siliques. Present in endoreduplicating cells.

It localises to the nucleus. The catalysed reaction is DNA(n) + a 2'-deoxyribonucleoside 5'-triphosphate = DNA(n+1) + diphosphate. With respect to regulation, unable to bypass a single 1,N(6)-ethenoadenine (epsilon-dA) or an abasic site lesions in DNA templates. Template-directed low-fidelity DNA polymerase specifically involved in DNA repair. Able to extend primer-terminal mispairs, and to insert nucleotides opposite to a single 7,8-dihydro-8-oxoGuanine (8-oxoG) lesion and moderately extend from the resulting primer end, thus leading to both error-free and error-prone bypass of 8-oxoG DNA lesions. Probably involved in consecutive DNA replication cycles in the absence of mitosis. Binds preferentially template-primer DNA substrates or single-stranded DNA. Plays an important role in translesion synthesis, where the normal high-fidelity DNA polymerases cannot proceed and DNA synthesis stalls. Depending on the context, it inserts the correct base, but causes frequent base transitions, transversions and frameshifts. The chain is DNA polymerase kappa from Arabidopsis thaliana (Mouse-ear cress).